We begin with the raw amino-acid sequence, 314 residues long: tRNA dimethylallyltransferase 1 (314 aa).

8–15 (GPTGSGKS) is an ATP binding site. Substrate is bound at residue 10–15 (TGSGKS).

The protein belongs to the IPP transferase family. As to quaternary structure, monomer. Mg(2+) serves as cofactor.

It catalyses the reaction adenosine(37) in tRNA + dimethylallyl diphosphate = N(6)-dimethylallyladenosine(37) in tRNA + diphosphate. In terms of biological role, catalyzes the transfer of a dimethylallyl group onto the adenine at position 37 in tRNAs that read codons beginning with uridine, leading to the formation of N6-(dimethylallyl)adenosine (i(6)A). This is tRNA dimethylallyltransferase 1 from Mycobacterium ulcerans (strain Agy99).